The primary structure comprises 319 residues: tRNA N6-adenosine threonylcarbamoyltransferase (319 aa).

Fe cation is bound by residues His110 and His114. Residues 135 to 139 (VVSGG), Asp168, Gly181, Asp185, and Asn277 each bind substrate. Asp301 contributes to the Fe cation binding site.

Belongs to the KAE1 / TsaD family. It depends on Fe(2+) as a cofactor.

The protein resides in the cytoplasm. The enzyme catalyses L-threonylcarbamoyladenylate + adenosine(37) in tRNA = N(6)-L-threonylcarbamoyladenosine(37) in tRNA + AMP + H(+). Functionally, required for the formation of a threonylcarbamoyl group on adenosine at position 37 (t(6)A37) in tRNAs that read codons beginning with adenine. Is involved in the transfer of the threonylcarbamoyl moiety of threonylcarbamoyl-AMP (TC-AMP) to the N6 group of A37, together with TsaE and TsaB. TsaD likely plays a direct catalytic role in this reaction. The protein is tRNA N6-adenosine threonylcarbamoyltransferase of Mycoplasma pneumoniae (strain ATCC 29342 / M129 / Subtype 1) (Mycoplasmoides pneumoniae).